We begin with the raw amino-acid sequence, 130 residues long: Immunoglobulin kappa chain variable 9-120 (130 aa).

The first 22 residues, 1 to 22 (MDMRAPAQIFGFLLLLFQGTRC), serve as a signal peptide directing secretion. A framework-1 region spans residues 23–45 (DIQMTQSPSSLSASLGERVSLTC). The cysteines at positions 45 and 110 are disulfide-linked. The complementarity-determining-1 stretch occupies residues 46 to 56 (RASQDIGSSLN). Residues 57–71 (WLQQEPDGTIKRLIY) are framework-2. Residues 72 to 78 (ATSSLDS) form a complementarity-determining-2 region. The segment at 79–110 (GVPKRFSGSRSGSDYSLTISSLESEDFVDYYC) is framework-3. Positions 111–119 (LQYASSPWT) are complementarity-determining-3. The segment at 120-129 (FGGGTKLEIK) is framework-4.

The polypeptide is Immunoglobulin kappa chain variable 9-120 (Mus musculus (Mouse)).